Here is a 559-residue protein sequence, read N- to C-terminus: Suppressor of tumorigenicity 7 protein-like (559 aa).

Transmembrane regions (helical) follow at residues 39–59, 83–103, and 513–533; these read GLANSGSTLWFLAGLGLLYAL, FYVALTGTSSLISGLIFIFEW, and LPFFIHFTAGLCSSTAMLAFL.

This sequence belongs to the ST7 family. Ubiquitously expressed.

It is found in the membrane. The sequence is that of Suppressor of tumorigenicity 7 protein-like (St7l) from Mus musculus (Mouse).